A 409-amino-acid chain; its full sequence is Elongation factor Tu, plastid (409 aa).

One can recognise a tr-type G domain in the interval 10 to 214 (KPHINIGTIG…SVDSYIPTPV (205 aa)). Positions 19–26 (GHVDHGKT) are G1. 19 to 26 (GHVDHGKT) contacts GTP. Threonine 26 contributes to the Mg(2+) binding site. Residues 60 to 64 (GITIN) are G2. The segment at 81–84 (DCPG) is G3. Residues 81 to 85 (DCPGH) and 136 to 139 (NKED) each bind GTP. Residues 136 to 139 (NKED) form a G4 region. The tract at residues 174–176 (SAL) is G5.

It belongs to the TRAFAC class translation factor GTPase superfamily. Classic translation factor GTPase family. EF-Tu/EF-1A subfamily.

The protein resides in the plastid. The enzyme catalyses GTP + H2O = GDP + phosphate + H(+). Functionally, GTP hydrolase that promotes the GTP-dependent binding of aminoacyl-tRNA to the A-site of ribosomes during protein biosynthesis. The sequence is that of Elongation factor Tu, plastid (tufA) from Helicosporidium sp. subsp. Simulium jonesii (Green alga).